A 457-amino-acid chain; its full sequence is Argininosuccinate lyase (457 aa).

Belongs to the lyase 1 family. Argininosuccinate lyase subfamily.

It is found in the cytoplasm. The enzyme catalyses 2-(N(omega)-L-arginino)succinate = fumarate + L-arginine. The protein operates within amino-acid biosynthesis; L-arginine biosynthesis; L-arginine from L-ornithine and carbamoyl phosphate: step 3/3. The sequence is that of Argininosuccinate lyase from Escherichia coli O157:H7 (strain EC4115 / EHEC).